Here is a 156-residue protein sequence, read N- to C-terminus: Small ribosomal subunit protein uS7 (156 aa).

The protein belongs to the universal ribosomal protein uS7 family. Part of the 30S ribosomal subunit. Contacts proteins S9 and S11.

One of the primary rRNA binding proteins, it binds directly to 16S rRNA where it nucleates assembly of the head domain of the 30S subunit. Is located at the subunit interface close to the decoding center, probably blocks exit of the E-site tRNA. The sequence is that of Small ribosomal subunit protein uS7 from Bartonella quintana (strain Toulouse) (Rochalimaea quintana).